The following is a 450-amino-acid chain: Divalent metal cation transporter MntH (450 aa).

The next 11 membrane-spanning stretches (helical) occupy residues 34–54, 61–81, 108–128, 141–161, 170–190, 212–232, 263–283, 305–325, 361–381, 383–403, and 422–442; these read LSFL…GNWI, AQYG…AMLL, IAII…IAEV, IPLI…LFIM, AIVG…VYIS, GILY…NLYL, IQLS…ASLF, PVLG…ALLA, SLAV…AAKI, QLLV…LIPL, and VNII…YLIV.

Belongs to the NRAMP family.

The protein resides in the cell membrane. In terms of biological role, h(+)-stimulated, divalent metal cation uptake system. This is Divalent metal cation transporter MntH from Staphylococcus aureus (strain Mu3 / ATCC 700698).